A 624-amino-acid chain; its full sequence is Chaperone protein HtpG (624 aa).

The interval 1–336 (MKGQETRGFQ…SSDLPLNVSR (336 aa)) is a; substrate-binding. A b region spans residues 337-552 (EILQDSTVTR…ADEMSTQMAK (216 aa)). Positions 553–624 (LFAAAGQKVP…IRRMNQLLVS (72 aa)) are c.

This sequence belongs to the heat shock protein 90 family. Homodimer.

It localises to the cytoplasm. Molecular chaperone. Has ATPase activity. This Escherichia coli O139:H28 (strain E24377A / ETEC) protein is Chaperone protein HtpG.